Consider the following 265-residue polypeptide: Adenosine 5'-phosphosulfate reductase (265 aa).

[4Fe-4S] cluster contacts are provided by Cys-135, Cys-136, Cys-218, and Cys-221. Cys-246 functions as the Nucleophile; cysteine thiosulfonate intermediate in the catalytic mechanism.

It belongs to the PAPS reductase family. CysH subfamily. It depends on [4Fe-4S] cluster as a cofactor.

The protein localises to the cytoplasm. It carries out the reaction [thioredoxin]-disulfide + sulfite + AMP + 2 H(+) = adenosine 5'-phosphosulfate + [thioredoxin]-dithiol. It participates in sulfur metabolism; hydrogen sulfide biosynthesis; sulfite from sulfate. In terms of biological role, catalyzes the formation of sulfite from adenosine 5'-phosphosulfate (APS) using thioredoxin as an electron donor. This is Adenosine 5'-phosphosulfate reductase from Rhizobium meliloti (strain 1021) (Ensifer meliloti).